We begin with the raw amino-acid sequence, 160 residues long: Endoribonuclease YbeY (160 aa).

The Zn(2+) site is built by histidine 112, histidine 116, and histidine 122. The interval 141-160 (ELGHPDPYACDDEEPPSKEK) is disordered.

Belongs to the endoribonuclease YbeY family. Zn(2+) is required as a cofactor.

Its subcellular location is the cytoplasm. Single strand-specific metallo-endoribonuclease involved in late-stage 70S ribosome quality control and in maturation of the 3' terminus of the 16S rRNA. The chain is Endoribonuclease YbeY from Pseudomonas aeruginosa (strain UCBPP-PA14).